Here is a 607-residue protein sequence, read N- to C-terminus: Cyclic-di-GMP receptor FimW (607 aa).

Positions 323–492 (ERTFQRTQGQ…GGTQMGIEMI (170 aa)) are pilZ-like domain. Positions 324 to 328 (RTFQR) match the RXXXR motif motif. The short motif at 435-440 (NHSPGG) is the D/NXSXXG motif element. Over residues 568-582 (SQFEYRSAEPVNTPS) the composition is skewed to polar residues. Residues 568 to 607 (SQFEYRSAEPVNTPSDKPVTAPVARPPAGEEDFDSLWKSL) form a disordered region.

In terms of assembly, monomer in the absence of c-di-GMP. Forms dimers in the presence of c-di-GMP.

The protein resides in the cytoplasm. Functionally, high-affinity cyclic-di-GMP binding protein that regulates type IV pili (T4P) elongation. Required for T4P-mediated surface attachment and walking motility during the early phases of surface colonization. Not required for twitching motility. Does not bind related nucleotides such as GMP, GDP, GTP or ATP. The protein is Cyclic-di-GMP receptor FimW of Pseudomonas aeruginosa (strain ATCC 15692 / DSM 22644 / CIP 104116 / JCM 14847 / LMG 12228 / 1C / PRS 101 / PAO1).